Reading from the N-terminus, the 359-residue chain is Fructose-bisphosphate aldolase (359 aa).

At Thr11 the chain carries Phosphothreonine. A Glycyl lysine isopeptide (Lys-Gly) (interchain with G-Cter in ubiquitin) cross-link involves residue Lys27. Phosphoserine occurs at positions 56 and 63. Residue Ser63 coordinates D-glyceraldehyde 3-phosphate. Lys73 is covalently cross-linked (Glycyl lysine isopeptide (Lys-Gly) (interchain with G-Cter in ubiquitin)). A phosphoserine mark is found at Ser76 and Ser83. Residue Lys85 forms a Glycyl lysine isopeptide (Lys-Gly) (interchain with G-Cter in ubiquitin) linkage. A Phosphoserine modification is found at Ser96. Residue Asp110 is the Proton donor of the active site. Zn(2+) contacts are provided by His111 and Asp145. The residue at position 147 (Ser147) is a Phosphoserine. At Thr150 the chain carries Phosphothreonine. Glu175 is a binding site for Zn(2+). Residue Thr179 is modified to Phosphothreonine. Residue His227 participates in Zn(2+) binding. Gly228 is a binding site for dihydroxyacetone phosphate. His265 provides a ligand contact to Zn(2+). Residues 266 to 268 and 287 to 290 each bind dihydroxyacetone phosphate; these read GGS and NLDT. Position 268 is a phosphoserine (Ser268). At Thr290 the chain carries Phosphothreonine. A Glycyl lysine isopeptide (Lys-Gly) (interchain with G-Cter in ubiquitin) cross-link involves residue Lys308. Position 310 is a phosphotyrosine (Tyr310). A Phosphoserine modification is found at Ser313.

Belongs to the class II fructose-bisphosphate aldolase family. As to quaternary structure, homodimer. Zn(2+) serves as cofactor.

It carries out the reaction beta-D-fructose 1,6-bisphosphate = D-glyceraldehyde 3-phosphate + dihydroxyacetone phosphate. It functions in the pathway carbohydrate degradation; glycolysis; D-glyceraldehyde 3-phosphate and glycerone phosphate from D-glucose: step 4/4. Catalyzes the aldol condensation of dihydroxyacetone phosphate (DHAP or glycerone-phosphate) with glyceraldehyde 3-phosphate (G3P) to form fructose 1,6-bisphosphate (FBP) in gluconeogenesis and the reverse reaction in glycolysis. The polypeptide is Fructose-bisphosphate aldolase (FBA1) (Saccharomyces cerevisiae (strain ATCC 204508 / S288c) (Baker's yeast)).